We begin with the raw amino-acid sequence, 910 residues long: Disease susceptibility protein LOV1 (910 aa).

Positions 22 to 60 form a coiled coil; the sequence is ARLNGIGEQVDGLKRQLGRLQSLLKDADAKKHESERVRN. The 293-residue stretch at 169-461 folds into the NB-ARC domain; it reads EQSVEALAGH…AAEGIITSSD (293 aa). LRR repeat units lie at residues 584-609, 610-632, 634-655, 700-725, 726-751, and 847-871; these read LPLL…IGDL, IHLR…LRNL, LLLY…LKEM, MTKL…LGQL, RSLE…IVLN, and MPLL…NYIT.

It belongs to the disease resistance NB-LRR family. RPP8/HRT subfamily.

Its function is as follows. Confers susceptibility to the fungus Cochliobolus victoriae by conditioning victorin-dependent (victorin is a toxin synthesized by C.victoriae) induction of defense-associated proteins. The sequence is that of Disease susceptibility protein LOV1 (LOV1) from Arabidopsis thaliana (Mouse-ear cress).